The primary structure comprises 874 residues: Translation initiation factor IF-2 (874 aa).

Residues 1–289 (MKIKNAQLTK…KHYDEHSVQR (289 aa)) form a disordered region. Residues 31–48 (SSSEKPTTKVPEKVAKEK) show a composition bias toward basic and acidic residues. A compositionally biased stretch (polar residues) spans 81 to 104 (RSSFASEDSTIPSPVSVDTESTAF). Low complexity predominate over residues 105–118 (SPPVVEEVVSPLES). Composition is skewed to basic and acidic residues over residues 144–158 (PPKK…KEPP) and 186–198 (PKKE…KERT). The span at 199–211 (GTVQTKPQQSSEV) shows a compositional bias: polar residues. Residues 228–260 (YRRDTSKRPGSDFRDRSKKDDSPKAFTGRDRYG) are compositionally biased toward basic and acidic residues. Over residues 271–280 (RKKRVQKTKK) the composition is skewed to basic residues. Residues 380-549 (IRPPIVAFMG…ALQAEVLELK (170 aa)) enclose the tr-type G domain. Residues 389–396 (GHVDHGKT) are G1. Residue 389–396 (GHVDHGKT) coordinates GTP. Residues 414–418 (AITQH) form a G2 region. Positions 435 to 438 (DTPG) are G3. Residues 435 to 439 (DTPGH) and 489 to 492 (NKCD) contribute to the GTP site. The segment at 489–492 (NKCD) is G4. Residues 525–527 (SAK) form a G5 region.

The protein belongs to the TRAFAC class translation factor GTPase superfamily. Classic translation factor GTPase family. IF-2 subfamily.

The protein localises to the cytoplasm. Functionally, one of the essential components for the initiation of protein synthesis. Protects formylmethionyl-tRNA from spontaneous hydrolysis and promotes its binding to the 30S ribosomal subunits. Also involved in the hydrolysis of GTP during the formation of the 70S ribosomal complex. The sequence is that of Translation initiation factor IF-2 from Chlamydia abortus (strain DSM 27085 / S26/3) (Chlamydophila abortus).